Reading from the N-terminus, the 326-residue chain is Ornithine carbamoyltransferase (326 aa).

Carbamoyl phosphate-binding positions include 57 to 60 (STRT), Q84, R108, and 135 to 138 (HPTQ). L-ornithine contacts are provided by residues N169, D233, and 237–238 (SM). Residue 275 to 276 (CL) participates in carbamoyl phosphate binding.

Belongs to the aspartate/ornithine carbamoyltransferase superfamily. OTCase family.

It localises to the cytoplasm. It carries out the reaction carbamoyl phosphate + L-ornithine = L-citrulline + phosphate + H(+). It functions in the pathway amino-acid biosynthesis; L-arginine biosynthesis; L-arginine from L-ornithine and carbamoyl phosphate: step 1/3. Functionally, reversibly catalyzes the transfer of the carbamoyl group from carbamoyl phosphate (CP) to the N(epsilon) atom of ornithine (ORN) to produce L-citrulline. In Escherichia coli O6:K15:H31 (strain 536 / UPEC), this protein is Ornithine carbamoyltransferase.